The following is a 253-amino-acid chain: Sulfate transporter CysZ (253 aa).

4 helical membrane-spanning segments follow: residues 27-47 (FVLLPLSINIVLFCGLIYLAV), 71-91 (ILWPLFVALVLLMVFFTFTVV), 150-170 (LFILSFIPVANIIAAPLWLLF), and 211-231 (IVYVALLIPVVNLLMMPAAVA).

The protein belongs to the CysZ family.

It localises to the cell inner membrane. In terms of biological role, high affinity, high specificity proton-dependent sulfate transporter, which mediates sulfate uptake. Provides the sulfur source for the cysteine synthesis pathway. This Pseudomonas syringae pv. tomato (strain ATCC BAA-871 / DC3000) protein is Sulfate transporter CysZ.